Consider the following 93-residue polypeptide: Integration host factor subunit beta (93 aa).

The interval 59-93 (RVGRNPKTGQSVSLDGKFVPHFKPGKELRDRVNDD) is disordered. The segment covering 82–93 (PGKELRDRVNDD) has biased composition (basic and acidic residues).

It belongs to the bacterial histone-like protein family. In terms of assembly, heterodimer of an alpha and a beta chain.

This protein is one of the two subunits of integration host factor, a specific DNA-binding protein that functions in genetic recombination as well as in transcriptional and translational control. The protein is Integration host factor subunit beta of Stutzerimonas stutzeri (strain A1501) (Pseudomonas stutzeri).